A 178-amino-acid polypeptide reads, in one-letter code: Large ribosomal subunit protein bL17 (178 aa).

Residues 126–139 (DRARRVAASKKAEE) show a composition bias toward basic and acidic residues. The segment at 126–178 (DRARRVAASKKAEEQAPAAEAEEQAPAAEAEAPAADAAAEAKADEAAEDKKDA) is disordered. The span at 140–163 (QAPAAEAEEQAPAAEAEAPAADAA) shows a compositional bias: low complexity. Basic and acidic residues predominate over residues 164–178 (AEAKADEAAEDKKDA).

The protein belongs to the bacterial ribosomal protein bL17 family. Part of the 50S ribosomal subunit. Contacts protein L32.

This Nocardia farcinica (strain IFM 10152) protein is Large ribosomal subunit protein bL17.